The sequence spans 162 residues: MKSRKFFSKLKEESYDVSIFDLMNAKVYLEKDMTYLPQDYKKGYIEDFFTFFPEVLKEIKNKTEEEIEDFEIEDEEIKRVELRLCSMGSKQTGRESYEKLVKTVINYLIFINERPLHALTTRFPGGKQIIEKNGNYYCPIKNAQSNELSICEFCICKDLNEL.

Belongs to the UPF0305 family.

This is UPF0305 protein MMP0665 from Methanococcus maripaludis (strain DSM 14266 / JCM 13030 / NBRC 101832 / S2 / LL).